A 554-amino-acid chain; its full sequence is Malate synthase 2 (554 aa).

Residue arginine 177 is the Proton acceptor of the active site. The Proton donor role is filled by aspartate 457. The SKL peroxisome targeting motif motif lies at 552–554 (SKL).

It belongs to the malate synthase family. As to quaternary structure, interacts with PEX9.

It is found in the peroxisome matrix. The enzyme catalyses glyoxylate + acetyl-CoA + H2O = (S)-malate + CoA + H(+). In terms of biological role, allantoin metabolism-specific malate synthase involved in the recycling the glyoxylate generated during allantoin degradation by the ureidoglycollate (UG) hydrolase reaction. The chain is Malate synthase 2 from Saccharomyces cerevisiae (strain ATCC 204508 / S288c) (Baker's yeast).